A 238-amino-acid chain; its full sequence is Ribosomal RNA large subunit methyltransferase E (238 aa).

Positions 85, 87, 113, 129, and 153 each coordinate S-adenosyl-L-methionine. Lysine 193 (proton acceptor) is an active-site residue.

This sequence belongs to the class I-like SAM-binding methyltransferase superfamily. RNA methyltransferase RlmE family.

It localises to the cytoplasm. It carries out the reaction uridine(2552) in 23S rRNA + S-adenosyl-L-methionine = 2'-O-methyluridine(2552) in 23S rRNA + S-adenosyl-L-homocysteine + H(+). In terms of biological role, specifically methylates the uridine in position 2552 of 23S rRNA at the 2'-O position of the ribose in the fully assembled 50S ribosomal subunit. The sequence is that of Ribosomal RNA large subunit methyltransferase E from Ruegeria sp. (strain TM1040) (Silicibacter sp.).